Consider the following 368-residue polypeptide: FAD-dependent monooxygenase phomE (368 aa).

Position 11 (Ala11) interacts with FAD. Active-site residues include Arg140 and Tyr178. Residues Asp249 and Gly262 each coordinate FAD.

Belongs to the paxM FAD-dependent monooxygenase family. Monomer. FAD is required as a cofactor.

Its function is as follows. FAD-dependent monooxygenase; part of the gene cluster that mediates the biosynthesis of the phomopsins, a group of hexapeptide mycotoxins which infects lupins and causes lupinosis disease in livestock. The role of phomE within the phomopsins biosynthesis pathway has still to be determined. The pathway starts with the processing of the precursor phomA by several endopeptidases including kexin proteases as well as the cluster-specific S41 family peptidase phomP1 and the oligopeptidase phomG to produce 10 identical copies of the hexapeptide Tyr-Val-Ile-Pro-Ile-Asp. After being excised from the precursor peptide, the core peptides are cyclized and modified post-translationally by enzymes encoded within the gene cluster. The timing and order of proteolysis of the phomA precursor and PTMs are still unknown. Two tyrosinase-like enzymes, phomQ1 and phomQ2, catalyze the chlorination and hydroxylation of Tyr, respectively. PhomYb, is proposed to be involved in the construction of the macrocyclic structure. The other 4 ustYa family proteins may be involved in PTMs that generate the unique structure of phomopsin A. PhomYa is required for the hydroxylation of C-beta of Tyr. PhomYc, phomYd, and phomYe are responsible for the biosynthesis of 2,3-dehydroisoleucine (dIle), 2,3-dehydroaspartic acid (dAsp), and 3,4-dehydroproline (dPro), respectively. While dIle formation by phomYc is indispensable for the installation of dAsp by phomYd, the order of the other PTMs have not been elucidated yet. Most of the biosynthetic enzymes likely have broad substrate specificity, and thus, there might be a metabolic grid from a precursor to phomopsin A. The enzyme(s) responsible for the biosynthesis of 3,4-dehydrovaline (dVal) have also not been identified yet. Finally, phomM acts as an S-adenosylmethionine-dependent alpha-N-methyltransferase that catalyzes two successive N-methylation reactions, converting N-desmethyl-phomopsin A to phomopsin A and phomopsin A further to an N,N-dimethylated congener called phomopsin E. In Diaporthe leptostromiformis (Lupinosis disease fungus), this protein is FAD-dependent monooxygenase phomE.